The sequence spans 191 residues: Protein Ves (191 aa).

The protein belongs to the Ves family.

This chain is Protein Ves, found in Escherichia coli O7:K1 (strain IAI39 / ExPEC).